A 146-amino-acid polypeptide reads, in one-letter code: Hemoglobin subunit beta (146 aa).

Val1 carries the post-translational modification N-acetylvaline. The region spanning 2–146 (HLSDGEKNAI…VANALAHKYH (145 aa)) is the Globin domain. Ser44 is modified (phosphoserine). Lys59 carries the post-translational modification N6-acetyllysine. His63 provides a ligand contact to heme b. Lys82 bears the N6-acetyllysine mark. Residue His92 coordinates heme b. Cys93 is modified (S-nitrosocysteine). Residue Lys144 is modified to N6-acetyllysine.

Belongs to the globin family. In terms of assembly, heterotetramer of two alpha chains and two beta chains. In terms of tissue distribution, red blood cells.

Functionally, involved in oxygen transport from the lung to the various peripheral tissues. The protein is Hemoglobin subunit beta (HBB) of Spermophilus citellus (European ground squirrel).